The chain runs to 251 residues: Probable transcriptional regulatory protein Mflv_3828 (251 aa).

Belongs to the TACO1 family.

Its subcellular location is the cytoplasm. This chain is Probable transcriptional regulatory protein Mflv_3828, found in Mycolicibacterium gilvum (strain PYR-GCK) (Mycobacterium gilvum (strain PYR-GCK)).